The following is a 758-amino-acid chain: 1-phosphatidylinositol 4,5-bisphosphate phosphodiesterase delta-4 (758 aa).

The region spanning 16 to 124 (QLMQAGSPMR…WIQGLEKLIE (109 aa)) is the PH domain. The interval 26 to 53 (KVKSRSWKKQRYFKLQEDCMTIWYNSKK) is substrate binding. EF-hand domains are found at residues 134–169 (LMDQ…MNVD), 170–205 (MSEH…LTQR), and 206–237 (DEVL…GQLE). 10 residues coordinate Ca(2+): Asp147, Asn149, Asp151, Arg153, Glu158, Asp183, Ser185, Ser187, Thr189, and Glu194. Positions 213–243 (QDFSKDGKKLTLLEFVDFLQQGQLEEENTEE) match the GBA motif. Positions 290-435 (QDMMQPLCHY…LRGKILLKGK (146 aa)) constitute a PI-PLC X-box domain. The active site involves His305. Ca(2+) contacts are provided by Asn306, Glu335, and Asp337. His350 is a catalytic residue. Glu384 is a binding site for Ca(2+). Residues Lys433 and Lys435 each coordinate substrate. The span at 446–468 (EQPDDSLGEVSDEEENIEVEEER) shows a compositional bias: acidic residues. A disordered region spans residues 446–479 (EQPDDSLGEVSDEEENIEVEEERNEDKKRAKKSK). Positions 486–602 (LSDCVIYCKS…GYVLKPSFMR (117 aa)) constitute a PI-PLC Y-box domain. Substrate-binding residues include Ser515 and Arg542. The C2 domain maps to 602 to 731 (RHVETTFNPD…SGYRHIHLLS (130 aa)). Ca(2+) is bound by residues Ile645, Asp647, Asn671, Asp700, Tyr701, and Asp702. A PDZ-binding motif is present at residues 726–729 (HIHL).

Ca(2+) is required as a cofactor.

The protein localises to the membrane. Its subcellular location is the nucleus. It localises to the cytoplasm. It is found in the endoplasmic reticulum. The catalysed reaction is a 1,2-diacyl-sn-glycero-3-phospho-(1D-myo-inositol-4,5-bisphosphate) + H2O = 1D-myo-inositol 1,4,5-trisphosphate + a 1,2-diacyl-sn-glycerol + H(+). It catalyses the reaction a 1,2-diacyl-sn-glycero-3-phospho-(1D-myo-inositol) + H2O = 1D-myo-inositol 1-phosphate + a 1,2-diacyl-sn-glycerol + H(+). Its function is as follows. Hydrolyzes the phosphatidylinositol 4,5-bisphosphate (PIP2) to generate 2 second messenger molecules diacylglycerol (DAG) and inositol 1,4,5-trisphosphate (IP3). DAG mediates the activation of protein kinase C (PKC), while IP3 releases Ca(2+) from intracellular stores. The polypeptide is 1-phosphatidylinositol 4,5-bisphosphate phosphodiesterase delta-4 (plcd4) (Xenopus laevis (African clawed frog)).